We begin with the raw amino-acid sequence, 392 residues long: MLDFMDNVQHAFYEASHWNVDNSYGALNATARALLDFDSPRGLRLQISSLAAPNFATSYTLGSVGVVDGSVSYLYSSLPLRKDFKSSRIDLHHVIRGFKHLQELRKPDEKWSWEQWHAGRRVDRKDTLLYGRIFLPQSRLEALYLRRLAPTRQLRIAAVSDSNLNNGGTILTLLQTDSGKYSTEYMYSTDSALMGLRGLYNFGPDPRVAPTEPTRPEQVEPVHGRFSAGAELYYGILNKSGGMSTGLRFTTLPNHPGFPYTMTLTLNPLMGNLSSTYAVKAGPSLALCSRFDFNFYSYESELQLGCELWRRRGNTDTEWAVKKLRPDWKRPAASPDDDVAGVLKAKVDQDGRVGLLWEGRIKELLFTLGASLDLKKREQIFRSVGIELQYSS.

This sequence belongs to the MDM10 family. As to quaternary structure, component of the ER-mitochondria encounter structure (ERMES) or MDM complex, composed of MMM1, MDM10, MDM12 and MDM34. Associates with the mitochondrial outer membrane sorting assembly machinery SAM(core) complex.

Its subcellular location is the mitochondrion outer membrane. In terms of biological role, component of the ERMES/MDM complex, which serves as a molecular tether to connect the endoplasmic reticulum and mitochondria. Components of this complex are involved in the control of mitochondrial shape and protein biogenesis and may function in phospholipid exchange. MDM10 is involved in the late assembly steps of the general translocase of the mitochondrial outer membrane (TOM complex). Functions in the TOM40-specific route of the assembly of outer membrane beta-barrel proteins, including the association of TOM40 with the receptor TOM22 and small TOM proteins. Can associate with the SAM(core) complex as well as the MDM12-MMM1 complex, both involved in late steps of the major beta-barrel assembly pathway, that is responsible for biogenesis of all outer membrane beta-barrel proteins. May act as a switch that shuttles between both complexes and channels precursor proteins into the TOM40-specific pathway. Plays a role in mitochondrial morphology and in the inheritance of mitochondria. The chain is Mitochondrial distribution and morphology protein 10 from Phaeosphaeria nodorum (strain SN15 / ATCC MYA-4574 / FGSC 10173) (Glume blotch fungus).